A 66-amino-acid polypeptide reads, in one-letter code: Large ribosomal subunit protein bL35 (66 aa).

Basic residues predominate over residues 1–16 (MPKQKTHRASAKRFKR). The interval 1–20 (MPKQKTHRASAKRFKRTGSG) is disordered.

This sequence belongs to the bacterial ribosomal protein bL35 family.

This Streptococcus uberis (strain ATCC BAA-854 / 0140J) protein is Large ribosomal subunit protein bL35.